A 124-amino-acid polypeptide reads, in one-letter code: Pal-related lipoprotein (124 aa).

The first 18 residues, 1–18 (MRYRAVFPMLIIVFALSG), serve as a signal peptide directing secretion. Cys-19 carries the N-palmitoyl cysteine lipid modification. Cys-19 carries S-diacylglycerol cysteine lipidation.

The protein resides in the cell membrane. The polypeptide is Pal-related lipoprotein (slp) (Bacillus subtilis (strain 168)).